The following is a 286-amino-acid chain: GTP cyclohydrolase MptA (286 aa).

This sequence belongs to the GTP cyclohydrolase IV family. As to quaternary structure, homodimer. Fe(2+) serves as cofactor.

It carries out the reaction GTP + H2O = 7,8-dihydroneopterin 2',3'-cyclic phosphate + formate + diphosphate + H(+). It functions in the pathway cofactor biosynthesis; 5,6,7,8-tetrahydromethanopterin biosynthesis. In terms of biological role, converts GTP to 7,8-dihydro-D-neopterin 2',3'-cyclic phosphate, the first intermediate in the biosynthesis of coenzyme methanopterin. The polypeptide is GTP cyclohydrolase MptA (Thermoplasma acidophilum (strain ATCC 25905 / DSM 1728 / JCM 9062 / NBRC 15155 / AMRC-C165)).